Consider the following 161-residue polypeptide: Large ribosomal subunit protein uL16 (161 aa).

The segment at 140 to 161 (LNKGNYKPAKTPVTADDSESSS) is disordered.

This sequence belongs to the universal ribosomal protein uL16 family. Part of the 50S ribosomal subunit.

Its function is as follows. Binds 23S rRNA and is also seen to make contacts with the A and possibly P site tRNAs. In Prochlorococcus marinus (strain NATL1A), this protein is Large ribosomal subunit protein uL16.